The primary structure comprises 89 residues: UPF0367 protein MAE_19160 (89 aa).

Belongs to the UPF0367 family.

The protein is UPF0367 protein MAE_19160 of Microcystis aeruginosa (strain NIES-843 / IAM M-2473).